The sequence spans 246 residues: UDP-N-acetyl-D-mannosaminuronic acid transferase (246 aa).

This sequence belongs to the glycosyltransferase 26 family.

The catalysed reaction is UDP-N-acetyl-alpha-D-mannosaminouronate + N-acetyl-alpha-D-glucosaminyl-di-trans,octa-cis-undecaprenyl diphosphate = beta-D-ManNAcA-(1-&gt;4)-alpha-D-GlcNAc-di-trans,octa-cis-undecaprenyl diphosphate + UDP + H(+). Its pathway is bacterial outer membrane biogenesis; enterobacterial common antigen biosynthesis. Catalyzes the synthesis of Und-PP-GlcNAc-ManNAcA (Lipid II), the second lipid-linked intermediate involved in enterobacterial common antigen (ECA) synthesis. The protein is UDP-N-acetyl-D-mannosaminuronic acid transferase of Escherichia coli O6:K15:H31 (strain 536 / UPEC).